The chain runs to 123 residues: Small ribosomal subunit protein bS16 (123 aa).

The disordered stretch occupies residues alanine 79–glutamate 123.

This sequence belongs to the bacterial ribosomal protein bS16 family.

The polypeptide is Small ribosomal subunit protein bS16 (Brucella melitensis biotype 2 (strain ATCC 23457)).